Reading from the N-terminus, the 136-residue chain is ATP synthase epsilon chain (136 aa).

The protein belongs to the ATPase epsilon chain family. As to quaternary structure, F-type ATPases have 2 components, CF(1) - the catalytic core - and CF(0) - the membrane proton channel. CF(1) has five subunits: alpha(3), beta(3), gamma(1), delta(1), epsilon(1). CF(0) has three main subunits: a, b and c.

The protein resides in the cell membrane. Its function is as follows. Produces ATP from ADP in the presence of a proton gradient across the membrane. The protein is ATP synthase epsilon chain of Herpetosiphon aurantiacus (strain ATCC 23779 / DSM 785 / 114-95).